The chain runs to 79 residues: Conotoxin 1 (79 aa).

A signal peptide spans 1–22; that stretch reads MKLTCVLIITVLFLTASQLITA. Positions 23 to 46 are excised as a propeptide; it reads DYSRDQRQYRAVRLGDEMRTFKGA. 3 disulfide bridges follow: cysteine 49-cysteine 62, cysteine 56-cysteine 67, and cysteine 61-cysteine 77.

This sequence belongs to the conotoxin O1 superfamily. As to expression, expressed by the venom duct.

It localises to the secreted. The sequence is that of Conotoxin 1 from Conus vexillum (Flag cone).